The sequence spans 261 residues: Imidazole glycerol phosphate synthase subunit HisF (261 aa).

Active-site residues include aspartate 11 and aspartate 130.

This sequence belongs to the HisA/HisF family. Heterodimer of HisH and HisF.

The protein localises to the cytoplasm. It catalyses the reaction 5-[(5-phospho-1-deoxy-D-ribulos-1-ylimino)methylamino]-1-(5-phospho-beta-D-ribosyl)imidazole-4-carboxamide + L-glutamine = D-erythro-1-(imidazol-4-yl)glycerol 3-phosphate + 5-amino-1-(5-phospho-beta-D-ribosyl)imidazole-4-carboxamide + L-glutamate + H(+). It functions in the pathway amino-acid biosynthesis; L-histidine biosynthesis; L-histidine from 5-phospho-alpha-D-ribose 1-diphosphate: step 5/9. IGPS catalyzes the conversion of PRFAR and glutamine to IGP, AICAR and glutamate. The HisF subunit catalyzes the cyclization activity that produces IGP and AICAR from PRFAR using the ammonia provided by the HisH subunit. The chain is Imidazole glycerol phosphate synthase subunit HisF from Heliobacterium mobile (Heliobacillus mobilis).